Reading from the N-terminus, the 91-residue chain is uncharacterized protein (91 aa).

To phage P2 ORF83.

This is an uncharacterized protein from Escherichia phage 186 (Bacteriophage 186).